The chain runs to 420 residues: Aminoacyltransferase FemA (420 aa).

Belongs to the FemABX family. In terms of assembly, homodimer. Interacts with FemB.

The protein resides in the cytoplasm. The enzyme catalyses beta-D-GlcNAc-(1-&gt;4)-Mur2Ac(oyl-L-Ala-D-isoglutaminyl-L-Lys-(N(6)-Gly)-D-Ala-D-Ala)-di-trans,octa-cis-undecaprenyl diphosphate + 2 glycyl-tRNA(Gly) = MurNAc-L-Ala-D-isoglutaminyl-L-Lys-(N(6)-tri-Gly)-D-Ala-D-Ala-diphospho-di-trans,octa-cis-undecaprenyl-GlcNAc + 2 tRNA(Gly) + 2 H(+). Catalyzes the formation of the pentaglycine interpeptide bridge, which is characteristic of the S.aureus peptidoglycan. Adds glycines 2 and 3 of the pentaglycine bridge, using glycyl-tRNA(Gly) as donor. Involved in resistance to methicillin. The chain is Aminoacyltransferase FemA (femA) from Staphylococcus aureus (strain NCTC 8325 / PS 47).